We begin with the raw amino-acid sequence, 214 residues long: ATP phosphoribosyltransferase (214 aa).

It belongs to the ATP phosphoribosyltransferase family. Short subfamily. Heteromultimer composed of HisG and HisZ subunits.

The protein localises to the cytoplasm. The enzyme catalyses 1-(5-phospho-beta-D-ribosyl)-ATP + diphosphate = 5-phospho-alpha-D-ribose 1-diphosphate + ATP. It functions in the pathway amino-acid biosynthesis; L-histidine biosynthesis; L-histidine from 5-phospho-alpha-D-ribose 1-diphosphate: step 1/9. Catalyzes the condensation of ATP and 5-phosphoribose 1-diphosphate to form N'-(5'-phosphoribosyl)-ATP (PR-ATP). Has a crucial role in the pathway because the rate of histidine biosynthesis seems to be controlled primarily by regulation of HisG enzymatic activity. The protein is ATP phosphoribosyltransferase of Azoarcus sp. (strain BH72).